A 201-amino-acid polypeptide reads, in one-letter code: Ras-related protein Rab-1B (201 aa).

At methionine 1 the chain carries N-acetylmethionine. Positions 17, 18, 19, 20, 21, 22, 23, 33, 34, 35, 36, 39, and 40 each coordinate GTP. Serine 22 provides a ligand contact to Mg(2+). Residues 30 to 45 carry the Switch 1 motif; it reads DDTYTESYISTIGVDF. Mg(2+) is bound by residues threonine 40 and aspartate 63. The tract at residues 64–83 is switch 2 region; required for interaction with REP1/CHM; the sequence is TAGQERFRTITSSYYRGAHG. Positions 65–80 match the Switch 2 motif; that stretch reads AGQERFRTITSSYYRG. Residues glycine 66, asparagine 121, lysine 122, aspartate 124, serine 151, alanine 152, and lysine 153 each contribute to the GTP site. Residues 174 to 201 are disordered; it reads GPGAASGGERPNLKIDSTPVKPAGGGCC. S-geranylgeranyl cysteine attachment occurs at residues cysteine 200 and cysteine 201. Residue cysteine 201 is modified to Cysteine methyl ester.

It belongs to the small GTPase superfamily. Rab family. As to quaternary structure, interacts with MICAL1 and MICAL2. Interacts (in GTP-bound form) with MICALCL, MICAL1 and MILCAL3. Interacts with GDI1; the interaction requires the GDP-bound state. Interacts with CHM/REP1; the interaction requires the GDP-bound form and is necessary for prenylation by GGTase II. Interacts with RabGAP TBC1D20. Interacts (in GDP-bound form) with lipid phosphatase MTMR6 (via GRAM domain); the interaction regulates MTMR6 recruitment to the endoplasmic reticulum-Golgi intermediate compartment. Interacts (in GDP-bound form) with lipid phosphatase MTMR7. It depends on Mg(2+) as a cofactor. Post-translationally, prenylated; by GGTase II, only after interaction of the substrate with Rab escort protein 1 (REP1).

It localises to the cytoplasm. The protein resides in the membrane. Its subcellular location is the preautophagosomal structure membrane. It is found in the perinuclear region. It catalyses the reaction GTP + H2O = GDP + phosphate + H(+). Regulated by guanine nucleotide exchange factors (GEFs) which promote the exchange of bound GDP for free GTP. Regulated by GTPase activating proteins (GAPs) including TBC1D20 which increases the GTP hydrolysis activity. Inhibited by GDP dissociation inhibitors (GDIs). Functionally, the small GTPases Rab are key regulators of intracellular membrane trafficking, from the formation of transport vesicles to their fusion with membranes. Rabs cycle between an inactive GDP-bound form and an active GTP-bound form that is able to recruit to membranes different set of downstream effectors directly responsible for vesicle formation, movement, tethering and fusion. Plays a role in the initial events of the autophagic vacuole development which take place at specialized regions of the endoplasmic reticulum. Regulates vesicular transport between the endoplasmic reticulum and successive Golgi compartments. Required to modulate the compacted morphology of the Golgi. Promotes the recruitment of lipid phosphatase MTMR6 to the endoplasmic reticulum-Golgi intermediate compartment. This chain is Ras-related protein Rab-1B (RAB1B), found in Macaca fascicularis (Crab-eating macaque).